The primary structure comprises 435 residues: MNHKVGFVSLGCPKALVDSERIITQLKAQGYELVPTYEDAGVVVINTCGFIDSAVQESLDTIKEAMAENGRVIVTGCLGAKADVIKNACPDVLHISGAHAYEEVVNAVHQHLPPPADPFTQLIPPQGIKLTPRHYAYLKISEGCNQKCTFCIIPTMRGKLQSYPMAQILTEAKKLKQAGVKELLVISQDTSAYGVDTRYQQVEWQGKTVNTRFYDLCEQLGELGIWVRLHYVYPYPHVDDIVPLMRDGLILPYLDIPLQHANSRILKAMKRPASSENTLLRIASWREICPDITLRSTFIVGFPGETEEEFSELLAFLKEAQLDRVGCFKYSPVEGAKANDLDNPVSEDIKEERYHRFMQVQAEISRNKLKNKIGSTQTVLIDEITEDQIIARSKSDAPEIDGLVYLPKISGITVGSFAEVVITDSDDYDLYASLV.

Residues 3 to 113 form the MTTase N-terminal domain; the sequence is HKVGFVSLGC…VVNAVHQHLP (111 aa). 6 residues coordinate [4Fe-4S] cluster: Cys-12, Cys-48, Cys-77, Cys-144, Cys-148, and Cys-151. Positions 130 to 367 constitute a Radical SAM core domain; the sequence is LTPRHYAYLK…MQVQAEISRN (238 aa). The region spanning 370–435 is the TRAM domain; the sequence is KNKIGSTQTV…DDYDLYASLV (66 aa).

It belongs to the methylthiotransferase family. RimO subfamily. It depends on [4Fe-4S] cluster as a cofactor.

Its subcellular location is the cytoplasm. It carries out the reaction L-aspartate(89)-[ribosomal protein uS12]-hydrogen + (sulfur carrier)-SH + AH2 + 2 S-adenosyl-L-methionine = 3-methylsulfanyl-L-aspartate(89)-[ribosomal protein uS12]-hydrogen + (sulfur carrier)-H + 5'-deoxyadenosine + L-methionine + A + S-adenosyl-L-homocysteine + 2 H(+). Catalyzes the methylthiolation of an aspartic acid residue of ribosomal protein uS12. The chain is Ribosomal protein uS12 methylthiotransferase RimO from Legionella pneumophila (strain Lens).